The chain runs to 521 residues: Tigger transposable element-derived protein 6 (521 aa).

The HTH psq-type domain maps to 3 to 54 (NKGNKKRRQFSLEEKMKVVGAVDSGKRKGDVAKEFGITPSTLSTFLKDRTKF). 2 consecutive DNA-binding regions (H-T-H motif) follow at residues 30 to 50 (KGDV…FLKD) and 99 to 130 (SVIR…FRDR). Positions 66 to 137 (QRKRMRSALY…RDRHGIALKA (72 aa)) constitute an HTH CENPB-type domain. Residues 170–372 (YSPDDIFNAD…VKPSTVVKCW (203 aa)) enclose the DDE-1 domain.

This sequence belongs to the tigger transposable element derived protein family.

The protein localises to the nucleus. The polypeptide is Tigger transposable element-derived protein 6 (TIGD6) (Homo sapiens (Human)).